A 334-amino-acid chain; its full sequence is Putative peptide import ATP-binding protein BAB2_1053 (334 aa).

An ABC transporter domain is found at 22 to 272; it reads VRTDDLVRDF…PLHPYSRALL (251 aa). Position 64-71 (64-71) interacts with ATP; sequence GESGSGKS.

This sequence belongs to the ABC transporter superfamily. The complex is composed of two ATP-binding proteins (BAB2_1052 and BAB2_1053), two transmembrane proteins (BAB2_1050 and BAB2_1051) and a solute-binding protein (BAB2_1049).

It is found in the cell inner membrane. In terms of biological role, probably part of an ABC transporter complex that could be involved in peptide import. Probably responsible for energy coupling to the transport system. The polypeptide is Putative peptide import ATP-binding protein BAB2_1053 (Brucella abortus (strain 2308)).